The sequence spans 87 residues: UPF0367 protein SynWH7803_2240 (87 aa).

Belongs to the UPF0367 family.

In Synechococcus sp. (strain WH7803), this protein is UPF0367 protein SynWH7803_2240.